The sequence spans 341 residues: Tetraacyldisaccharide 4'-kinase (341 aa).

Position 54–61 (54–61 (TVGGAGKT)) interacts with ATP.

This sequence belongs to the LpxK family.

It carries out the reaction a lipid A disaccharide + ATP = a lipid IVA + ADP + H(+). It participates in glycolipid biosynthesis; lipid IV(A) biosynthesis; lipid IV(A) from (3R)-3-hydroxytetradecanoyl-[acyl-carrier-protein] and UDP-N-acetyl-alpha-D-glucosamine: step 6/6. Its function is as follows. Transfers the gamma-phosphate of ATP to the 4'-position of a tetraacyldisaccharide 1-phosphate intermediate (termed DS-1-P) to form tetraacyldisaccharide 1,4'-bis-phosphate (lipid IVA). In Brucella suis (strain ATCC 23445 / NCTC 10510), this protein is Tetraacyldisaccharide 4'-kinase.